A 300-amino-acid chain; its full sequence is Porphobilinogen deaminase (300 aa).

The residue at position 242 (C242) is an S-(dipyrrolylmethanemethyl)cysteine.

This sequence belongs to the HMBS family. As to quaternary structure, monomer. Requires dipyrromethane as cofactor.

The catalysed reaction is 4 porphobilinogen + H2O = hydroxymethylbilane + 4 NH4(+). It functions in the pathway porphyrin-containing compound metabolism; protoporphyrin-IX biosynthesis; coproporphyrinogen-III from 5-aminolevulinate: step 2/4. Functionally, tetrapolymerization of the monopyrrole PBG into the hydroxymethylbilane pre-uroporphyrinogen in several discrete steps. This Blochmanniella pennsylvanica (strain BPEN) protein is Porphobilinogen deaminase.